We begin with the raw amino-acid sequence, 154 residues long: UPF0178 protein BAV3236 (154 aa).

Belongs to the UPF0178 family.

The sequence is that of UPF0178 protein BAV3236 from Bordetella avium (strain 197N).